The following is a 408-amino-acid chain: uncharacterized protein (408 aa).

Positions 49–77 are disordered; that stretch reads PRSSPEVQRKATAGENSEVGSPESSLSTS. Residues 62 to 77 are compositionally biased toward polar residues; the sequence is GENSEVGSPESSLSTS. Positions 124 to 170 constitute an F-box domain; it reads SFEFMQLPDTDICQIMSFLDAQSLLNLSQTCSHLRQLCLAHEDNAGK.

This is an uncharacterized protein from Caenorhabditis elegans.